The sequence spans 459 residues: Ribulose bisphosphate carboxylase (459 aa).

Substrate is bound at residue asparagine 111. Lysine 166 (proton acceptor) is an active-site residue. Residue lysine 168 coordinates substrate. The Mg(2+) site is built by lysine 191, aspartate 193, and glutamate 194. Lysine 191 bears the N6-carboxylysine mark. Catalysis depends on histidine 287, which acts as the Proton acceptor. The substrate site is built by arginine 288, histidine 321, and serine 368.

The protein belongs to the RuBisCO large chain family. Type II subfamily. As to quaternary structure, homodimer. The cofactor is Mg(2+).

The catalysed reaction is 2 (2R)-3-phosphoglycerate + 2 H(+) = D-ribulose 1,5-bisphosphate + CO2 + H2O. It carries out the reaction D-ribulose 1,5-bisphosphate + O2 = 2-phosphoglycolate + (2R)-3-phosphoglycerate + 2 H(+). In terms of biological role, ruBisCO catalyzes two reactions: the carboxylation of D-ribulose 1,5-bisphosphate, the primary event in carbon dioxide fixation, as well as the oxidative fragmentation of the pentose substrate. Both reactions occur simultaneously and in competition at the same active site. This is Ribulose bisphosphate carboxylase from Cereibacter sphaeroides (Rhodobacter sphaeroides).